The following is a 354-amino-acid chain: Rhodopsin (354 aa).

Residues 1–36 (MNGTEGPYFYIPMLNTTGVVRSPYEYPQYYLVNPAA) are Extracellular-facing. 2 N-linked (GlcNAc...) asparagine glycosylation sites follow: Asn2 and Asn15. The chain crosses the membrane as a helical span at residues 37 to 61 (YAVLGAYMFFLILVGFPINFLTLYV). Residues 62–73 (TIEHKKLRTPLN) lie on the Cytoplasmic side of the membrane. Residues 74-96 (YILLNLAVADLFMVFGGFTTTIY) traverse the membrane as a helical segment. Residues 97-110 (TSMHGYFVLGRLGC) are Extracellular-facing. Cysteines 110 and 187 form a disulfide. A helical membrane pass occupies residues 111-133 (NVEGFSATLGGEIALWSLVVLAI). The 'Ionic lock' involved in activated form stabilization motif lies at 134 to 136 (ERW). Residues 134–152 (ERWVVVCKPISNFRFGENH) are Cytoplasmic-facing. The chain crosses the membrane as a helical span at residues 153–173 (AIMGVAFTWFMAAACAVPPLF). The Extracellular segment spans residues 174–202 (GWSRYIPEGMQCSCGIDYYTRAEGFNNES). The N-linked (GlcNAc...) asparagine glycan is linked to Asn200. The helical transmembrane segment at 203–224 (FVIYMFTCHFCIPLMVVFFCYG) threads the bilayer. At 225-252 (RLVCAVKEAAAAQQESETTQRAEREVTR) the chain is on the cytoplasmic side. Residues 253–274 (MVIIMVVSFLVSWVPYASVAWY) traverse the membrane as a helical segment. Residues 275–286 (IFTHQGSEFGPL) lie on the Extracellular side of the membrane. Residues 287 to 308 (FMTIPAFFAKSSSIYNPMIYIC) traverse the membrane as a helical segment. N6-(retinylidene)lysine is present on Lys296. Over 309 to 354 (MNKQFRHCMITTLCCGKNPFEEEEGASSTASKTEASSVSSSSVSPA) the chain is Cytoplasmic. Residues Cys322 and Cys323 are each lipidated (S-palmitoyl cysteine). A disordered region spans residues 329-354 (EEEEGASSTASKTEASSVSSSSVSPA). The segment covering 334 to 354 (ASSTASKTEASSVSSSSVSPA) has biased composition (low complexity).

This sequence belongs to the G-protein coupled receptor 1 family. Opsin subfamily. In terms of processing, phosphorylated on some or all of the serine and threonine residues present in the C-terminal region. Contains one covalently linked retinal chromophore.

It localises to the membrane. The protein resides in the cell projection. It is found in the cilium. The protein localises to the photoreceptor outer segment. Photoreceptor required for image-forming vision at low light intensity. While most salt water fish species use retinal as chromophore, most freshwater fish use 3-dehydroretinal, or a mixture of retinal and 3-dehydroretinal. Light-induced isomerization of 11-cis to all-trans retinal triggers a conformational change that activates signaling via G-proteins. Subsequent receptor phosphorylation mediates displacement of the bound G-protein alpha subunit by arrestin and terminates signaling. This Atherina boyeri (Big-scale sand smelt) protein is Rhodopsin (rho).